A 352-amino-acid polypeptide reads, in one-letter code: Neutral protease 2 (352 aa).

The N-terminal stretch at 1–19 (MRVTTLSTALFALASTAVS) is a signal peptide. Residues 20-175 (APTAGSSSPG…TKALSQLTRR (156 aa)) constitute a propeptide that is removed on maturation. 3 cysteine pairs are disulfide-bonded: Cys-181–Cys-253, Cys-260–Cys-278, and Cys-292–Cys-352. Position 303 (His-303) interacts with Zn(2+). Residue Glu-304 is part of the active site. Zn(2+) contacts are provided by His-307 and Asp-318.

Belongs to the peptidase M35 family. It depends on Zn(2+) as a cofactor.

The catalysed reaction is Preferential cleavage of bonds with hydrophobic residues in P1'. Also 3-Asn-|-Gln-4 and 8-Gly-|-Ser-9 bonds in insulin B chain.. Metalloprotease that shows high activities on basic nuclear substrates such as histone and protamine. This is Neutral protease 2 from Aspergillus oryzae (strain ATCC 42149 / RIB 40) (Yellow koji mold).